The following is a 437-amino-acid chain: Eukaryotic peptide chain release factor subunit 1 (437 aa).

Gln-182 bears the N5-methylglutamine mark. Residue Lys-331 forms a Glycyl lysine isopeptide (Lys-Gly) (interchain with G-Cter in ubiquitin) linkage. Ser-421 carries the phosphoserine modification.

The protein belongs to the eukaryotic release factor 1 family. As to quaternary structure, component of the eRF1-eRF3-GTP ternary complex, composed of SUP45/eRF1, SUP35/eRF3 and GTP. Interacts with TPA1. Post-translationally, N5-methylated on Gln-182 by MTQ2.

Its subcellular location is the cytoplasm. Its function is as follows. Component of the eRF1-eRF3-GTP ternary complex, a ternary complex that mediates translation termination in response to the termination codons. The eRF1-eRF3-GTP complex binds to a stop codon in the ribosomal A-site. SUP45/eRF1 is responsible for stop codon recognition and inducing hydrolysis of peptidyl-tRNA. Following GTP hydrolysis by SUP35/eRF3, SUP35/eRF3 dissociates, permitting SUP45/eRF1 to accommodate fully in the A-site and mediate hydrolysis of peptidyl-tRNA. In Saccharomyces cerevisiae (strain ATCC 204508 / S288c) (Baker's yeast), this protein is Eukaryotic peptide chain release factor subunit 1 (SUP45).